The primary structure comprises 283 residues: 3-methyl-2-oxobutanoate hydroxymethyltransferase (283 aa).

Mg(2+) is bound by residues aspartate 46 and aspartate 85. Residues 46 to 47 (DS), aspartate 85, and lysine 115 contribute to the 3-methyl-2-oxobutanoate site. Glutamate 117 provides a ligand contact to Mg(2+). The Proton acceptor role is filled by glutamate 184.

The protein belongs to the PanB family. As to quaternary structure, homodecamer; pentamer of dimers. Mg(2+) is required as a cofactor.

It localises to the cytoplasm. It catalyses the reaction 3-methyl-2-oxobutanoate + (6R)-5,10-methylene-5,6,7,8-tetrahydrofolate + H2O = 2-dehydropantoate + (6S)-5,6,7,8-tetrahydrofolate. The protein operates within cofactor biosynthesis; (R)-pantothenate biosynthesis; (R)-pantoate from 3-methyl-2-oxobutanoate: step 1/2. Its function is as follows. Catalyzes the reversible reaction in which hydroxymethyl group from 5,10-methylenetetrahydrofolate is transferred onto alpha-ketoisovalerate to form ketopantoate. This chain is 3-methyl-2-oxobutanoate hydroxymethyltransferase, found in Acetivibrio thermocellus (strain ATCC 27405 / DSM 1237 / JCM 9322 / NBRC 103400 / NCIMB 10682 / NRRL B-4536 / VPI 7372) (Clostridium thermocellum).